Consider the following 206-residue polypeptide: Large ribosomal subunit protein uL4 (206 aa).

The disordered stretch occupies residues 47–75 (GTQSAKTRAEVSGGGIKPWRQKGTGRARQ).

The protein belongs to the universal ribosomal protein uL4 family. Part of the 50S ribosomal subunit.

In terms of biological role, one of the primary rRNA binding proteins, this protein initially binds near the 5'-end of the 23S rRNA. It is important during the early stages of 50S assembly. It makes multiple contacts with different domains of the 23S rRNA in the assembled 50S subunit and ribosome. Forms part of the polypeptide exit tunnel. The sequence is that of Large ribosomal subunit protein uL4 from Clostridium botulinum (strain 657 / Type Ba4).